Reading from the N-terminus, the 185-residue chain is Orotate phosphoribosyltransferase (185 aa).

5-phospho-alpha-D-ribose 1-diphosphate contacts are provided by residues Arg-94, Lys-95, Lys-98, His-100, and 120-128 (EDVTTTGGS). Orotate-binding residues include Thr-124 and Arg-152.

It belongs to the purine/pyrimidine phosphoribosyltransferase family. PyrE subfamily. Homodimer. It depends on Mg(2+) as a cofactor.

The catalysed reaction is orotidine 5'-phosphate + diphosphate = orotate + 5-phospho-alpha-D-ribose 1-diphosphate. The protein operates within pyrimidine metabolism; UMP biosynthesis via de novo pathway; UMP from orotate: step 1/2. Catalyzes the transfer of a ribosyl phosphate group from 5-phosphoribose 1-diphosphate to orotate, leading to the formation of orotidine monophosphate (OMP). The polypeptide is Orotate phosphoribosyltransferase (Thermococcus kodakarensis (strain ATCC BAA-918 / JCM 12380 / KOD1) (Pyrococcus kodakaraensis (strain KOD1))).